The chain runs to 282 residues: Bicarbonate transport ATP-binding protein CmpD (282 aa).

Positions 24-257 (LTIENVSKVY…RPRDRDRIME (234 aa)) constitute an ABC transporter domain. 60-67 (GHSGCGKS) provides a ligand contact to ATP.

Belongs to the ABC transporter superfamily. Nitrate/nitrite/cyanate uptake transporter (NitT) (TC 3.A.1.16) family. As to quaternary structure, the complex is composed of two ATP-binding proteins (CmpC and CmpD), a transmembrane protein (CmpB) and a solute-binding protein (CmpA).

Its subcellular location is the cell inner membrane. Part of the ABC transporter complex CmpABCD involved in bicarbonate transport. Responsible for energy coupling to the transport system. The polypeptide is Bicarbonate transport ATP-binding protein CmpD (cmpD) (Synechocystis sp. (strain ATCC 27184 / PCC 6803 / Kazusa)).